We begin with the raw amino-acid sequence, 119 residues long: Large ribosomal subunit protein uL18 (119 aa).

It belongs to the universal ribosomal protein uL18 family. Part of the 50S ribosomal subunit; part of the 5S rRNA/L5/L18/L25 subcomplex. Contacts the 5S and 23S rRNAs.

Its function is as follows. This is one of the proteins that bind and probably mediate the attachment of the 5S RNA into the large ribosomal subunit, where it forms part of the central protuberance. This Jannaschia sp. (strain CCS1) protein is Large ribosomal subunit protein uL18.